A 62-amino-acid polypeptide reads, in one-letter code: Conorfamide-Tx1 (62 aa).

Positions 1–19 (MSGRGFLLLALLLLVTVEA) are cleaved as a signal peptide. A propeptide spanning residues 20 to 26 (TKVEKNK) is cleaved from the precursor. At tyrosine 46 the chain carries Tyrosine amide. The propeptide occupies 47–62 (GRRDMQSPLLSERLRF).

Belongs to the FARP (FMRFamide related peptide) family. In terms of tissue distribution, expressed by the venom duct.

It is found in the secreted. Its function is as follows. This peptide does not show activity on human and mouse sensory neuron-specific G-protein coupled receptors MRGPRX1. The protein is Conorfamide-Tx1 of Conus textile (Cloth-of-gold cone).